A 124-amino-acid polypeptide reads, in one-letter code: Large ribosomal subunit protein bL21 (124 aa).

This sequence belongs to the bacterial ribosomal protein bL21 family. As to quaternary structure, part of the 50S ribosomal subunit. Contacts protein L20.

Its function is as follows. This protein binds to 23S rRNA in the presence of protein L20. The polypeptide is Large ribosomal subunit protein bL21 (Sinorhizobium medicae (strain WSM419) (Ensifer medicae)).